The sequence spans 343 residues: Cytoplasmic tRNA 2-thiolation protein 1 (343 aa).

This sequence belongs to the TtcA family. CTU1/NCS6/ATPBD3 subfamily.

Its subcellular location is the cytoplasm. It participates in tRNA modification; 5-methoxycarbonylmethyl-2-thiouridine-tRNA biosynthesis. Functionally, plays a central role in 2-thiolation of mcm(5)S(2)U at tRNA wobble positions of tRNA(Lys), tRNA(Glu) and tRNA(Gln). Directly binds tRNAs and probably acts by catalyzing adenylation of tRNAs, an intermediate required for 2-thiolation. It is unclear whether it acts as a sulfurtransferase that transfers sulfur from thiocarboxylated URM1 onto the uridine of tRNAs at wobble position. This Drosophila virilis (Fruit fly) protein is Cytoplasmic tRNA 2-thiolation protein 1.